Reading from the N-terminus, the 485-residue chain is Glutamate--tRNA ligase (485 aa).

The short motif at 11-21 is the 'HIGH' region element; the sequence is PSPTGYMHVGN. Residues Cys-108, Cys-110, Cys-135, and Asp-137 each coordinate Zn(2+). Positions 252-256 match the 'KMSKS' region motif; sequence KLSKR. Residue Lys-255 participates in ATP binding.

It belongs to the class-I aminoacyl-tRNA synthetase family. Glutamate--tRNA ligase type 1 subfamily. As to quaternary structure, monomer. It depends on Zn(2+) as a cofactor.

The protein resides in the cytoplasm. It carries out the reaction tRNA(Glu) + L-glutamate + ATP = L-glutamyl-tRNA(Glu) + AMP + diphosphate. Its function is as follows. Catalyzes the attachment of glutamate to tRNA(Glu) in a two-step reaction: glutamate is first activated by ATP to form Glu-AMP and then transferred to the acceptor end of tRNA(Glu). In Clostridium botulinum (strain Loch Maree / Type A3), this protein is Glutamate--tRNA ligase.